Consider the following 536-residue polypeptide: Sensory rhodopsin I transducer (536 aa).

Residues 2 to 14 are Cytoplasmic-facing; the sequence is TIAWARRRYGVKL. Residues 15–29 form a helical membrane-spanning segment; it reads GLGYIATAGLLVGVG. Topologically, residues 30–39 are extracellular; it reads VTTNDVPSTI. Residues 40 to 55 traverse the membrane as a helical segment; that stretch reads VAGIAGLLTLGSINAA. Positions 55-107 constitute an HAMP 1 domain; that stretch reads AETVASIKEIAAQTERVANGNLEQEVTSTRTDEFGSLADSIEQMRQSLRGRLN. The Cytoplasmic portion of the chain corresponds to 56–536; it reads ETVASIKEIA…MRAGADGGGA (481 aa). Positions 116-145 are disordered; it reads LEETQAEAETAREEAEQAKQEAQAAEREAR. Residues 124 to 145 show a composition bias toward basic and acidic residues; sequence ETAREEAEQAKQEAQAAEREAR. One can recognise an HAMP 2 domain in the interval 149–202; that stretch reads ATYQDTAKRYGETMEAAATGDLTQRVDVDTDHEAMETVGTAFNQMMDDLQATVR. A Methyl-accepting transducer domain is found at 221–459; the sequence is TSADIEASAG…STATSVERVA (239 aa). Glutamate 266 is subject to Glutamate methyl ester (Glu). The tract at residues 278–307 is disordered; sequence SEDVATASDAARDSSKSALDEMSSIETEVD. Residues 287 to 296 are compositionally biased toward basic and acidic residues; it reads AARDSSKSAL. Glutamate 473 is modified (glutamate methyl ester (Glu)). Residues 512 to 536 form a disordered region; sequence TEDSETAGGSVEQPVMRAGADGGGA.

It belongs to the methyl-accepting chemotaxis (MCP) protein family. Post-translationally, methylated by CheR.

It is found in the cell membrane. Transduces signals from the phototaxis receptor sensory rhodopsin I (SR-I) to the flagellar motor. Responds to light changes through the variation of the level of methylation. This Halobacterium salinarum (strain ATCC 29341 / DSM 671 / R1) protein is Sensory rhodopsin I transducer (htr1).